The following is a 181-amino-acid chain: Alkyl hydroperoxide reductase AhpD (181 aa).

C131 (proton donor) is an active-site residue. A disulfide bridge links C131 with C134. The active-site Cysteine sulfenic acid (-SOH) intermediate is C134.

This sequence belongs to the AhpD family.

It catalyses the reaction N(6)-[(R)-dihydrolipoyl]-L-lysyl-[lipoyl-carrier protein] + a hydroperoxide = N(6)-[(R)-lipoyl]-L-lysyl-[lipoyl-carrier protein] + an alcohol + H2O. Its function is as follows. Antioxidant protein with alkyl hydroperoxidase activity. Required for the reduction of the AhpC active site cysteine residues and for the regeneration of the AhpC enzyme activity. The protein is Alkyl hydroperoxide reductase AhpD of Azorhizobium caulinodans (strain ATCC 43989 / DSM 5975 / JCM 20966 / LMG 6465 / NBRC 14845 / NCIMB 13405 / ORS 571).